A 186-amino-acid polypeptide reads, in one-letter code: Adrenodoxin, mitochondrial (186 aa).

A mitochondrion-targeting transit peptide spans 1–58 (MAVRLLRVASAALGDTAVRWQPLVGPRAGNRGPGGSIWLGLGGRAAAARTLSLSARAW). The residue at position 61 (Ser61) is a Phosphoserine. Lys64 is subject to N6-acetyllysine; alternate. N6-succinyllysine; alternate is present on Lys64. The 2Fe-2S ferredoxin-type domain maps to 65 to 169 (ITVHFINRDG…NMTVRVPEAV (105 aa)). Residues Cys104, Cys110, Cys113, and Cys150 each contribute to the [2Fe-2S] cluster site. Residue Lys156 is modified to N6-succinyllysine. Position 175 is a phosphoserine (Ser175).

It belongs to the adrenodoxin/putidaredoxin family. As to quaternary structure, interacts with CYP11A1. Requires [2Fe-2S] cluster as cofactor.

The protein resides in the mitochondrion matrix. In terms of biological role, essential for the synthesis of various steroid hormones. Participates in the reduction of mitochondrial cytochrome P450 for steroidogenesis. Transfers electrons from adrenodoxin reductase to CYP11A1, a cytochrome P450 that catalyzes cholesterol side-chain cleavage. Does not form a ternary complex with adrenodoxin reductase and CYP11A1 but shuttles between the two enzymes to transfer electrons. This is Adrenodoxin, mitochondrial (FDX1) from Sus scrofa (Pig).